A 439-amino-acid chain; its full sequence is Phosphomethylpyrimidine synthase (439 aa).

Substrate is bound by residues asparagine 67, methionine 96, tyrosine 126, histidine 165, 187-189 (SRG), 228-231 (DSLR), and glutamate 267. Histidine 271 contributes to the Zn(2+) binding site. Residue tyrosine 294 coordinates substrate. Histidine 335 contacts Zn(2+). Cysteine 411, cysteine 414, and cysteine 418 together coordinate [4Fe-4S] cluster.

Belongs to the ThiC family. It depends on [4Fe-4S] cluster as a cofactor.

It catalyses the reaction 5-amino-1-(5-phospho-beta-D-ribosyl)imidazole + S-adenosyl-L-methionine = 4-amino-2-methyl-5-(phosphooxymethyl)pyrimidine + CO + 5'-deoxyadenosine + formate + L-methionine + 3 H(+). It functions in the pathway cofactor biosynthesis; thiamine diphosphate biosynthesis. In terms of biological role, catalyzes the synthesis of the hydroxymethylpyrimidine phosphate (HMP-P) moiety of thiamine from aminoimidazole ribotide (AIR) in a radical S-adenosyl-L-methionine (SAM)-dependent reaction. The polypeptide is Phosphomethylpyrimidine synthase (Ignicoccus hospitalis (strain KIN4/I / DSM 18386 / JCM 14125)).